We begin with the raw amino-acid sequence, 255 residues long: Homeobox protein DLX-1 (255 aa).

Positions 1-14 (MTMTTMPESLNSPV) are enriched in polar residues. Disordered regions lie at residues 1–38 (MTMT…MSHG) and 95–118 (SLAQ…EGGE). A compositionally biased stretch (low complexity) spans 25 to 36 (PPNQQMSPSPMS). Residues 100-112 (RLEDPGADSEKST) are compositionally biased toward basic and acidic residues. A DNA-binding region (homeobox) is located at residues 128–187 (IRKPRTIYSSLQLQALNRRFQQTQYLALPERAELAASLGLTQTQVKIWFQNKRSKFKKLM). The disordered stretch occupies residues 204–230 (ALSAGSPPVPPGWNPNSSSGKGSGGNA).

It belongs to the distal-less homeobox family. Interacts with SMAD4 (via homeobox DNA-binding domain). Interacts (via homeobox DNA-binding domain) with POU4F2; this interaction suppresses DLX1-mediated transcriptional activity in postnatal retina and enhances retinal ganglion cell (RGC) differentiation. Expressed in hematopoietic cell lines.

It is found in the nucleus. Its function is as follows. Plays a role as a transcriptional activator or repressor. Inhibits several cytokine signaling pathways, such as TGFB1, activin-A/INHBA and BMP4 by interfering with the transcriptional stimulatory activity of transcription factors, such as MSX2, FAST2, SMAD2 and SMAD3 during hematopoietic cell differentiation. Plays a role in terminal differentiation of interneurons, such as amacrine and bipolar cells in the developing retina. Likely to play a regulatory role in the development of the ventral forebrain. May play a role in craniofacial patterning and morphogenesis and may be involved in the early development of diencephalic subdivisions. In Homo sapiens (Human), this protein is Homeobox protein DLX-1 (DLX1).